Here is a 254-residue protein sequence, read N- to C-terminus: Probable transcriptional regulatory protein Cyan7425_4347 (254 aa).

This sequence belongs to the TACO1 family.

The protein resides in the cytoplasm. The chain is Probable transcriptional regulatory protein Cyan7425_4347 from Cyanothece sp. (strain PCC 7425 / ATCC 29141).